A 183-amino-acid polypeptide reads, in one-letter code: Capsid protein (183 aa).

The disordered stretch occupies residues asparagine 136–cysteine 183. Residues valine 149–serine 176 show a composition bias toward basic residues. A phosphoserine; by host mark is found at serine 155, serine 162, and serine 170. One copy of the 1; half-length repeat lies at serine 155 to proline 161. The 3 X 8 AA repeats of S-P-R-R-R-[PR]-S-Q stretch occupies residues serine 155 to glutamine 177. The Bipartite nuclear localization signal signature appears at arginine 158–arginine 175. 2 tandem repeats follow at residues serine 162–glutamine 169 and serine 170–glutamine 177. The tract at residues glutamine 177 to cysteine 183 is RNA binding.

Belongs to the orthohepadnavirus core antigen family. Homodimerizes, then multimerizes. Interacts with cytosol exposed regions of viral L glycoprotein present in the reticulum-to-Golgi compartment. Interacts with human FLNB. Phosphorylated form interacts with host importin alpha; this interaction depends on the exposure of the NLS, which itself depends upon genome maturation and/or phosphorylation of the capsid protein. Interacts with host NUP153. Phosphorylated by host SRPK1, SRPK2, and maybe protein kinase C or GAPDH. Phosphorylation is critical for pregenomic RNA packaging. Protein kinase C phosphorylation is stimulated by HBx protein and may play a role in transport of the viral genome to the nucleus at the late step during the viral replication cycle.

It localises to the virion. The protein localises to the host cytoplasm. Self assembles to form an icosahedral capsid. Most capsids appear to be large particles with an icosahedral symmetry of T=4 and consist of 240 copies of capsid protein, though a fraction forms smaller T=3 particles consisting of 180 capsid proteins. Entering capsids are transported along microtubules to the nucleus. Phosphorylation of the capsid is thought to induce exposure of nuclear localization signal in the C-terminal portion of the capsid protein that allows binding to the nuclear pore complex via the importin (karyopherin-) alpha and beta. Capsids are imported in intact form through the nuclear pore into the nuclear basket, where it probably binds NUP153. Only capsids that contain the mature viral genome can release the viral DNA and capsid protein into the nucleoplasm. Immature capsids get stuck in the basket. Capsids encapsulate the pre-genomic RNA and the P protein. Pre-genomic RNA is reverse-transcribed into DNA while the capsid is still in the cytoplasm. The capsid can then either be directed to the nucleus, providing more genomes for transcription, or bud through the endoplasmic reticulum to provide new virions. In Homo sapiens (Human), this protein is Capsid protein.